Reading from the N-terminus, the 147-residue chain is Large ribosomal subunit protein uL13 (147 aa).

A disordered region spans residues 126-147; that stretch reads GGPEHPHAAQNPQPYEITQIAQ.

The protein belongs to the universal ribosomal protein uL13 family. In terms of assembly, part of the 50S ribosomal subunit.

In terms of biological role, this protein is one of the early assembly proteins of the 50S ribosomal subunit, although it is not seen to bind rRNA by itself. It is important during the early stages of 50S assembly. The chain is Large ribosomal subunit protein uL13 from Cutibacterium acnes (strain DSM 16379 / KPA171202) (Propionibacterium acnes).